We begin with the raw amino-acid sequence, 1038 residues long: Ras GTPase-activating protein 1 (1038 aa).

Residue Met1 is modified to N-acetylmethionine. Residues 1–16 (MMAAEAGSEEGGPATA) show a composition bias toward low complexity. 2 disordered regions span residues 1–24 (MMAA…AAAT) and 117–152 (ETLG…SLDG). Over residues 124-135 (GFPPLPPPPLLP) the composition is skewed to pro residues. An SH2 1 domain is found at 172–263 (WYHGKLDRTI…LKGEKLLYPV (92 aa)). Residues 270–332 (EDRRRVRAIL…VEDLVEEVGR (63 aa)) enclose the SH3 domain. The region spanning 342 to 432 (WFHGKISKQE…VEGYYLKEPV (91 aa)) is the SH2 2 domain. The region spanning 465-568 (NIVKKGYLLK…WMKGLQAFCS (104 aa)) is the PH domain. The C2 domain maps to 568–681 (SLRKSSPGTS…QKGHATDEWF (114 aa)). At Tyr606 the chain carries Phosphotyrosine. A Ras-GAP domain is found at 755-965 (KLESLLLCTL…HRMIMFLDEL (211 aa)). Ser822 is modified (phosphoserine).

Interacts with SQSTM1. Interacts with SPSB1; the interaction does not promote degradation. Interacts with CAV2 (tyrosine phosphorylated form). Directly interacts with NCK1. Interacts with PDGFRB (tyrosine phosphorylated). Interacts (via SH2 domain) with the 'Tyr-9' phosphorylated form of PDPK1. Interacts with tyrosine-phosphorylated EPHB4. Post-translationally, phosphorylated by SRC and LCK. The phosphorylation SRC inhibits its ability to stimulate the Ras-GTPase activity, whereas phosphorylation by LCK does not display any effect on stimulation activity.

The protein resides in the cytoplasm. In terms of biological role, inhibitory regulator of the Ras-cyclic AMP pathway. Stimulates the GTPase of normal but not oncogenic Ras p21. In Rattus norvegicus (Rat), this protein is Ras GTPase-activating protein 1 (Rasa1).